Here is a 204-residue protein sequence, read N- to C-terminus: MHDTEFETRAAELIEAGRFIDGRGWVPATSGNFSARLGDGRIAITVSGRHKGRLRPEDIMLVDAAGRSLDGRKPSAETLLHTGIYRRYPEAHAVLHPHSPASTLLSRLVSGAVILEDYELLKALAGIDTHATRIVVPVFPNDQDIPRLALKIEEYLVRHDGVHAYIIAGHGFYTWGKSVADALRHVEALEYLFDLETRMHGVKR.

Residues His96 and His98 each coordinate Zn(2+).

This sequence belongs to the aldolase class II family. MtnB subfamily. Zn(2+) serves as cofactor.

It catalyses the reaction 5-(methylsulfanyl)-D-ribulose 1-phosphate = 5-methylsulfanyl-2,3-dioxopentyl phosphate + H2O. Its pathway is amino-acid biosynthesis; L-methionine biosynthesis via salvage pathway; L-methionine from S-methyl-5-thio-alpha-D-ribose 1-phosphate: step 2/6. Catalyzes the dehydration of methylthioribulose-1-phosphate (MTRu-1-P) into 2,3-diketo-5-methylthiopentyl-1-phosphate (DK-MTP-1-P). This is Methylthioribulose-1-phosphate dehydratase from Methylococcus capsulatus (strain ATCC 33009 / NCIMB 11132 / Bath).